A 607-amino-acid chain; its full sequence is Guanine nucleotide-binding protein-like 1 (607 aa).

Basic residues predominate over residues 1–14; sequence MPRKKPFSVKQKKK. The interval 1 to 81 is disordered; the sequence is MPRKKPFSVK…GPRGYDPNRY (81 aa). Positions 15-26 are enriched in basic and acidic residues; the sequence is QLQDKRERKRGL. Phosphoserine occurs at positions 32, 33, and 34. Phosphothreonine occurs at positions 48 and 50. Phosphoserine is present on residues Ser51 and Ser68. The CP-type G domain maps to 178-418; the sequence is WRQLWRVLEM…LCDCPGLIFP (241 aa). A GTP-binding site is contributed by 225 to 228; the sequence is NKVD. At Ser324 the chain carries Phosphoserine. Residues 367–374 and 411–415 contribute to the GTP site; these read GFPNVGKS and DCPGL. The tract at residues 547–607 is disordered; it reads GPAGDEEEEE…PYALLGEDEC (61 aa). Residues 550–584 are compositionally biased toward acidic residues; that stretch reads GDEEEEEEEELSSSCEEEGEEDRDADEEGEGDEET. A phosphoserine mark is found at Ser561, Ser562, and Ser563.

It belongs to the TRAFAC class YlqF/YawG GTPase family.

Possible regulatory or functional link with the histocompatibility cluster. This is Guanine nucleotide-binding protein-like 1 (GNL1) from Homo sapiens (Human).